A 24-amino-acid polypeptide reads, in one-letter code: Ascaphin-4 (24 aa).

Expressed by the skin glands.

It is found in the secreted. Functionally, antimicrobial peptide that shows higher potency against Gram-negative bacteria than against Gram-positive bacteria. Has a very week hemolytic activity. The chain is Ascaphin-4 from Ascaphus truei (Coastal tailed frog).